We begin with the raw amino-acid sequence, 367 residues long: tRNA-specific 2-thiouridylase MnmA (367 aa).

ATP is bound by residues 6–13 and Met-32; that span reads AMSGGVDS. Cys-101 acts as the Nucleophile in catalysis. An intrachain disulfide couples Cys-101 to Cys-193. Residue Gly-125 coordinates ATP. Residues 143 to 145 are interaction with tRNA; that stretch reads KDQ. Cys-193 functions as the Cysteine persulfide intermediate in the catalytic mechanism.

This sequence belongs to the MnmA/TRMU family.

Its subcellular location is the cytoplasm. It carries out the reaction S-sulfanyl-L-cysteinyl-[protein] + uridine(34) in tRNA + AH2 + ATP = 2-thiouridine(34) in tRNA + L-cysteinyl-[protein] + A + AMP + diphosphate + H(+). In terms of biological role, catalyzes the 2-thiolation of uridine at the wobble position (U34) of tRNA, leading to the formation of s(2)U34. The polypeptide is tRNA-specific 2-thiouridylase MnmA (Mycobacterium tuberculosis (strain CDC 1551 / Oshkosh)).